The following is a 162-amino-acid chain: 2-C-methyl-D-erythritol 2,4-cyclodiphosphate synthase (162 aa).

Residues aspartate 8 and histidine 10 each coordinate a divalent metal cation. Residues 8-10 and 36-37 each bind 4-CDP-2-C-methyl-D-erythritol 2-phosphate; these read DVH and HS. A divalent metal cation is bound at residue histidine 44. 4-CDP-2-C-methyl-D-erythritol 2-phosphate-binding positions include 58–60, 63–67, 102–108, 134–137, phenylalanine 141, and arginine 144; these read DIG, FPDTD, AQAPKMA, and TTTE.

This sequence belongs to the IspF family. Homotrimer. The cofactor is a divalent metal cation.

The enzyme catalyses 4-CDP-2-C-methyl-D-erythritol 2-phosphate = 2-C-methyl-D-erythritol 2,4-cyclic diphosphate + CMP. Its pathway is isoprenoid biosynthesis; isopentenyl diphosphate biosynthesis via DXP pathway; isopentenyl diphosphate from 1-deoxy-D-xylulose 5-phosphate: step 4/6. Its function is as follows. Involved in the biosynthesis of isopentenyl diphosphate (IPP) and dimethylallyl diphosphate (DMAPP), two major building blocks of isoprenoid compounds. Catalyzes the conversion of 4-diphosphocytidyl-2-C-methyl-D-erythritol 2-phosphate (CDP-ME2P) to 2-C-methyl-D-erythritol 2,4-cyclodiphosphate (ME-CPP) with a corresponding release of cytidine 5-monophosphate (CMP). This Yersinia enterocolitica serotype O:8 / biotype 1B (strain NCTC 13174 / 8081) protein is 2-C-methyl-D-erythritol 2,4-cyclodiphosphate synthase.